Reading from the N-terminus, the 102-residue chain is Large ribosomal subunit protein bL21 (102 aa).

Belongs to the bacterial ribosomal protein bL21 family. As to quaternary structure, part of the 50S ribosomal subunit. Contacts protein L20.

Functionally, this protein binds to 23S rRNA in the presence of protein L20. This chain is Large ribosomal subunit protein bL21, found in Limosilactobacillus fermentum (strain NBRC 3956 / LMG 18251) (Lactobacillus fermentum).